Here is a 404-residue protein sequence, read N- to C-terminus: Putative transporter AmpG 2 (404 aa).

Helical transmembrane passes span 11 to 31 (IYNI…YLLT), 49 to 69 (IGLF…GPLL), 84 to 104 (YCLI…TGFN), 109 to 129 (FISF…YDML), 154 to 174 (FRIG…IISW), 177 to 197 (VYRT…FYPL), 224 to 244 (WLII…LAVM), 261 to 281 (LGYK…GGFL), 294 to 311 (VLVY…LYSY), 315 to 337 (ITTL…SPFF), 353 to 373 (IALI…ISGY), and 378 to 398 (LGWG…YILI).

Belongs to the major facilitator superfamily.

It is found in the cell inner membrane. The chain is Putative transporter AmpG 2 (ampG2) from Rickettsia bellii (strain RML369-C).